The following is an 89-amino-acid chain: MALTQEAKNQIIKEYARHNGDTGSVEVQVAVLTADINELNNHMSENKHDFSSQRGLMKKIGHRRNLLRYLRDIDVARYRTLISKLGLRR.

Belongs to the universal ribosomal protein uS15 family. As to quaternary structure, part of the 30S ribosomal subunit. Forms a bridge to the 50S subunit in the 70S ribosome, contacting the 23S rRNA.

In terms of biological role, one of the primary rRNA binding proteins, it binds directly to 16S rRNA where it helps nucleate assembly of the platform of the 30S subunit by binding and bridging several RNA helices of the 16S rRNA. Functionally, forms an intersubunit bridge (bridge B4) with the 23S rRNA of the 50S subunit in the ribosome. The protein is Small ribosomal subunit protein uS15 of Oenococcus oeni (strain ATCC BAA-331 / PSU-1).